Here is a 912-residue protein sequence, read N- to C-terminus: Receptor protein kinase WSS1 (912 aa).

The first 27 residues, 1–27 (MGRDARRLPLLPFLLLLLAAAAGVAES), serve as a signal peptide directing secretion. The Extracellular portion of the chain corresponds to 28–477 (ATDAEAIHDL…AGGGKSKPNT (450 aa)). LRR repeat units follow at residues 64–88 (AGKV…LSSL), 89–111 (TSLT…LARM), and 112–134 (GSLA…FLHG). N-linked (GlcNAc...) asparagine glycosylation is found at N159, N170, N196, N256, N286, N371, N376, N387, and N400. LRR repeat units lie at residues 184-208 (LVSL…LSSL), 235-261 (MKSL…TQLE), 281-303 (LMSL…AFAA), 364-388 (SSDV…LANL), 389-411 (TRLA…VLTT), and 413-438 (PSLT…SVNV). The tract at residues 448-472 (SSGSSGGGGGSDGDSSSSDSAGGGK) is disordered. Residues 478–498 (GMIIGIIVAVIILFACIALLV) form a helical membrane-spanning segment. At 499–912 (HHRKKKNVEK…SFNVPRKYNG (414 aa)) the chain is on the cytoplasmic side. Residues 580–859 (FSEDCILGRG…HCVNRLSSLV (280 aa)) form the Protein kinase domain. Residues 586–594 (LGRGGFGVV) and K607 each bind ATP. D708 serves as the catalytic Proton acceptor.

Belongs to the protein kinase superfamily. Ser/Thr protein kinase family. The cofactor is Mn(2+). Expressed in young and mature leaves.

The protein resides in the cell membrane. The enzyme catalyses L-seryl-[protein] + ATP = O-phospho-L-seryl-[protein] + ADP + H(+). It catalyses the reaction L-threonyl-[protein] + ATP = O-phospho-L-threonyl-[protein] + ADP + H(+). Its function is as follows. Transmembrane kinase receptor involved in the regulation of reactive oxygen species (ROS) homeostasis, chloroplast development and leaf senescence. The protein is Receptor protein kinase WSS1 of Oryza sativa subsp. japonica (Rice).